Here is a 495-residue protein sequence, read N- to C-terminus: MSRNTEATDDVKTWTGGPLNYKEGFFTQLATDELAKGINEEVVRAISAKRNEPEWMLEFRLNAYRAWLEMEEPHWLKAHYDKLNYQDYSYYSAPSCGNCDDTCASEPGAVQQTGANAFLSKEVEAAFEQLGVPVREGKEVAVDAIFDSVSVATTYREKLAEQGIIFCSFGEAIHDHPELVRKYLGTVVPGNDNFFAALNAAVASDGTFIYVPKGVRCPMELSTYFRINAEKTGQFERTILVADEDSYVSYIEGCSAPVRDSYQLHAAVVEVIIHKNAEVKYSTVQNWFPGDNNTGGILNFVTKRALCEGENSKMSWTQSETGSAITWKYPSCILRGDNSIGEFYSVALTSGHQQADTGTKMIHIGKNTKSTIISKGISAGHSQNSYRGLVKIMPTATNARNFTQCDSMLIGANCGAHTFPYVECRNNSAQLEHEATTSRIGEDQLFYCLQRGISEEDAISMIVNGFCKDVFSELPLEFAVEAQKLLAISLEHSVG.

The protein belongs to the iron-sulfur cluster assembly SufBD family. Part of the SufBCD complex that contains SufB, SufC and SufD. Interacts with SufA.

The SufBCD complex acts synergistically with SufE to stimulate the cysteine desulfurase activity of SufS. The SufBCD complex contributes to the assembly or repair of oxygen-labile iron-sulfur clusters under oxidative stress. May facilitate iron uptake from extracellular iron chelators under iron limitation. The protein is Iron-sulfur cluster assembly protein SufB (sufB) of Escherichia coli (strain K12).